We begin with the raw amino-acid sequence, 70 residues long: MKLLLVLITLIIAALANNALRDPLAPPVRRFGHLAGAPKLRGHDASRNVAAQPVYNAAEERLQQCRAHLD.

The first 16 residues, 1–16 (MKLLLVLITLIIAALA), serve as a signal peptide directing secretion.

This is an uncharacterized protein from Orgyia pseudotsugata (Douglas-fir tussock moth).